Here is a 118-residue protein sequence, read N- to C-terminus: Holo-[acyl-carrier-protein] synthase (118 aa).

Residues aspartate 8 and glutamate 50 each contribute to the Mg(2+) site.

It belongs to the P-Pant transferase superfamily. AcpS family. Mg(2+) serves as cofactor.

It localises to the cytoplasm. It catalyses the reaction apo-[ACP] + CoA = holo-[ACP] + adenosine 3',5'-bisphosphate + H(+). Transfers the 4'-phosphopantetheine moiety from coenzyme A to a Ser of acyl-carrier-protein. In Leifsonia xyli subsp. xyli (strain CTCB07), this protein is Holo-[acyl-carrier-protein] synthase.